The sequence spans 372 residues: Putative aminopeptidase SgcX (372 aa).

A divalent metal cation-binding residues include histidine 67 and aspartate 180. Catalysis depends on glutamate 212, which acts as the Proton acceptor. A divalent metal cation contacts are provided by glutamate 213, aspartate 235, and histidine 329.

It belongs to the peptidase M42 family. It depends on a divalent metal cation as a cofactor.

The protein is Putative aminopeptidase SgcX (sgcX) of Salmonella typhi.